The chain runs to 292 residues: 33 kDa chaperonin (292 aa).

Disulfide bonds link C230–C232 and C263–C266.

It belongs to the HSP33 family. Post-translationally, under oxidizing conditions two disulfide bonds are formed involving the reactive cysteines. Under reducing conditions zinc is bound to the reactive cysteines and the protein is inactive.

The protein resides in the cytoplasm. Redox regulated molecular chaperone. Protects both thermally unfolding and oxidatively damaged proteins from irreversible aggregation. Plays an important role in the bacterial defense system toward oxidative stress. This chain is 33 kDa chaperonin, found in Salmonella choleraesuis (strain SC-B67).